The sequence spans 417 residues: DNA primase DnaG (417 aa).

Residues 171–257 (DAIIIVEGRA…SVEDMARKEI (87 aa)) form the Toprim domain. Residues Glu177, Asp219, and Asp221 each coordinate Mg(2+). Residues 278 to 325 (VPGEKRTQDLRPQKPGASEQNSIKKENVENENESTPTSFEPISEPAPP) form a disordered region. The span at 279-289 (PGEKRTQDLRP) shows a compositional bias: basic and acidic residues.

The protein belongs to the archaeal DnaG primase family. In terms of assembly, forms a ternary complex with MCM helicase and DNA. The cofactor is Mg(2+).

It catalyses the reaction ssDNA + n NTP = ssDNA/pppN(pN)n-1 hybrid + (n-1) diphosphate.. In terms of biological role, RNA polymerase that catalyzes the synthesis of short RNA molecules used as primers for DNA polymerase during DNA replication. The protein is DNA primase DnaG of Methanosphaerula palustris (strain ATCC BAA-1556 / DSM 19958 / E1-9c).